A 108-amino-acid polypeptide reads, in one-letter code: Large ribosomal subunit protein bL21 (108 aa).

This sequence belongs to the bacterial ribosomal protein bL21 family. As to quaternary structure, part of the 50S ribosomal subunit. Contacts protein L20.

This protein binds to 23S rRNA in the presence of protein L20. The polypeptide is Large ribosomal subunit protein bL21 (Buchnera aphidicola subsp. Acyrthosiphon pisum (strain 5A)).